The chain runs to 990 residues: Bifunctional glutamine synthetase adenylyltransferase/adenylyl-removing enzyme (990 aa).

An adenylyl removase region spans residues 1–474; that stretch reads MIFSAITADL…HYAKLFEGDP (474 aa). The tract at residues 478–990 is adenylyl transferase; that stretch reads AKLPPVDYGA…FSRLIGGEDA (513 aa).

The protein belongs to the GlnE family. The cofactor is Mg(2+).

It carries out the reaction [glutamine synthetase]-O(4)-(5'-adenylyl)-L-tyrosine + phosphate = [glutamine synthetase]-L-tyrosine + ADP. It catalyses the reaction [glutamine synthetase]-L-tyrosine + ATP = [glutamine synthetase]-O(4)-(5'-adenylyl)-L-tyrosine + diphosphate. In terms of biological role, involved in the regulation of glutamine synthetase GlnA, a key enzyme in the process to assimilate ammonia. When cellular nitrogen levels are high, the C-terminal adenylyl transferase (AT) inactivates GlnA by covalent transfer of an adenylyl group from ATP to specific tyrosine residue of GlnA, thus reducing its activity. Conversely, when nitrogen levels are low, the N-terminal adenylyl removase (AR) activates GlnA by removing the adenylyl group by phosphorolysis, increasing its activity. The regulatory region of GlnE binds the signal transduction protein PII (GlnB) which indicates the nitrogen status of the cell. The chain is Bifunctional glutamine synthetase adenylyltransferase/adenylyl-removing enzyme from Rhodopseudomonas palustris (strain ATCC BAA-98 / CGA009).